Consider the following 197-residue polypeptide: Holliday junction branch migration complex subunit RuvA (197 aa).

Residues Met1 to Leu64 are domain I. The interval Thr65 to Gln143 is domain II. Residues Ile144–Val148 are flexible linker. Positions Thr149–Lys197 are domain III.

This sequence belongs to the RuvA family. Homotetramer. Forms an RuvA(8)-RuvB(12)-Holliday junction (HJ) complex. HJ DNA is sandwiched between 2 RuvA tetramers; dsDNA enters through RuvA and exits via RuvB. An RuvB hexamer assembles on each DNA strand where it exits the tetramer. Each RuvB hexamer is contacted by two RuvA subunits (via domain III) on 2 adjacent RuvB subunits; this complex drives branch migration. In the full resolvosome a probable DNA-RuvA(4)-RuvB(12)-RuvC(2) complex forms which resolves the HJ.

The protein localises to the cytoplasm. The RuvA-RuvB-RuvC complex processes Holliday junction (HJ) DNA during genetic recombination and DNA repair, while the RuvA-RuvB complex plays an important role in the rescue of blocked DNA replication forks via replication fork reversal (RFR). RuvA specifically binds to HJ cruciform DNA, conferring on it an open structure. The RuvB hexamer acts as an ATP-dependent pump, pulling dsDNA into and through the RuvAB complex. HJ branch migration allows RuvC to scan DNA until it finds its consensus sequence, where it cleaves and resolves the cruciform DNA. In Clostridium botulinum (strain Loch Maree / Type A3), this protein is Holliday junction branch migration complex subunit RuvA.